A 521-amino-acid polypeptide reads, in one-letter code: Serine/threonine-protein kinase A (521 aa).

Positions 15–289 constitute a Protein kinase domain; it reads YQLVELVGSG…DVIIRAIDAI (275 aa). Residues 21–29 and Lys45 contribute to the ATP site; that span reads VGSGAMGQV. The active-site Proton acceptor is Asp148.

This sequence belongs to the protein kinase superfamily. Ser/Thr protein kinase family. In terms of processing, autophosphorylated.

It carries out the reaction L-seryl-[protein] + ATP = O-phospho-L-seryl-[protein] + ADP + H(+). The enzyme catalyses L-threonyl-[protein] + ATP = O-phospho-L-threonyl-[protein] + ADP + H(+). Functionally, protein kinase that regulates cellular motility via phosphorylation of membrane proteins. The polypeptide is Serine/threonine-protein kinase A (spkA) (Synechocystis sp. (strain ATCC 27184 / PCC 6803 / Kazusa)).